Consider the following 397-residue polypeptide: Translocase of chloroplast 34 homolog, chloroplastic (397 aa).

Residues Met-1–Leu-72 form a disordered region. 2 stretches are compositionally biased toward acidic residues: residues Glu-10–Ser-32 and Ala-44–Ser-63. An AIG1-type G domain is found at Arg-90–Lys-321. Residues Gly-99–Ser-106 are G1. Residues Ser-102–Ser-107 and Gln-121–Gln-126 contribute to the GTP site. Ser-106 provides a ligand contact to Mg(2+). A homodimerization region spans residues Gln-121–Lys-124. A G2 region spans residues Gln-126–Asp-130. Positions Asp-155–Gly-158 are G3. Residues Arg-193–Arg-198 form a homodimerization region. A G4 region spans residues Thr-227–Asn-230. Residues His-228 and Glu-271–Asn-272 contribute to the GTP site. Positions Glu-271–Ser-273 are G5. A helical membrane pass occupies residues Leu-329 to Leu-349. An AKR2A-binding sequence (ABS) required for chloroplast outer envelope membrane targeting motif is present at residues Asp-350 to Arg-358.

This sequence belongs to the TRAFAC class TrmE-Era-EngA-EngB-Septin-like GTPase superfamily. AIG1/Toc34/Toc159-like paraseptin GTPase family. TOC34 subfamily. As to quaternary structure, homodimer, heterodimer with other TOC proteins, and monomer. Part of the TOC core complex that includes 1 protein for the specific recognition of transit peptides surrounded by a ring composed of four proteins forming translocation channels, and four to five GTP-binding proteins providing energy. This core complex can interact with components of the TIC complex to form a larger import complex. Interacts with ARSA1. Requires Mg(2+) as cofactor.

It is found in the plastid. Its subcellular location is the chloroplast outer membrane. Its function is as follows. GTPase involved in protein precursor import into chloroplasts. Seems to recognize chloroplast-destined precursor proteins and regulate their presentation to the translocation channel through GTP hydrolysis. Functions as an essential component of the outer chloroplast membrane translocon (TOC) complex, which, in turn, catalyzes the import of nucleus-encoded precursor polypeptides from the cytoplasm to the chloroplast. This Chlamydomonas reinhardtii (Chlamydomonas smithii) protein is Translocase of chloroplast 34 homolog, chloroplastic.